Consider the following 265-residue polypeptide: 4-hydroxy-tetrahydrodipicolinate reductase (265 aa).

NAD(+)-binding positions include 7–12, Asp-33, 96–98, and 120–123; these read GASGRM, GTT, and AANM. His-153 serves as the catalytic Proton donor/acceptor. Residue His-154 participates in (S)-2,3,4,5-tetrahydrodipicolinate binding. The Proton donor role is filled by Lys-157. 163-164 is a binding site for (S)-2,3,4,5-tetrahydrodipicolinate; sequence GT.

This sequence belongs to the DapB family.

The protein resides in the cytoplasm. It catalyses the reaction (S)-2,3,4,5-tetrahydrodipicolinate + NAD(+) + H2O = (2S,4S)-4-hydroxy-2,3,4,5-tetrahydrodipicolinate + NADH + H(+). The catalysed reaction is (S)-2,3,4,5-tetrahydrodipicolinate + NADP(+) + H2O = (2S,4S)-4-hydroxy-2,3,4,5-tetrahydrodipicolinate + NADPH + H(+). It functions in the pathway amino-acid biosynthesis; L-lysine biosynthesis via DAP pathway; (S)-tetrahydrodipicolinate from L-aspartate: step 4/4. In terms of biological role, catalyzes the conversion of 4-hydroxy-tetrahydrodipicolinate (HTPA) to tetrahydrodipicolinate. The protein is 4-hydroxy-tetrahydrodipicolinate reductase of Cupriavidus pinatubonensis (strain JMP 134 / LMG 1197) (Cupriavidus necator (strain JMP 134)).